Reading from the N-terminus, the 488-residue chain is Wax ester synthase/diacylglycerol acyltransferase 8 (488 aa).

Residues 1 to 195 lie on the Cytoplasmic side of the membrane; it reads MKNEEEEPLS…AIFTIGSTMR (195 aa). The Proton acceptor role is filled by histidine 135. The helical transmembrane segment at 196–214 threads the bilayer; sequence LIWNTLVDMFLLFATMLFL. The Lumenal portion of the chain corresponds to 215–488; that stretch reads KDTKTPLKGG…RGLLKEAYKV (274 aa). N-linked (GlcNAc...) asparagine glycans are attached at residues asparagine 238, asparagine 252, asparagine 353, and asparagine 397.

It in the N-terminal section; belongs to the long-chain O-acyltransferase family. Mostly expressed in flowers and siliques and at low levels in stems.

The protein localises to the cell membrane. Its subcellular location is the endoplasmic reticulum membrane. It carries out the reaction an acyl-CoA + a 1,2-diacyl-sn-glycerol = a triacyl-sn-glycerol + CoA. The enzyme catalyses a long chain fatty alcohol + a fatty acyl-CoA = a wax ester + CoA. The protein operates within glycerolipid metabolism; triacylglycerol biosynthesis. Its pathway is lipid metabolism. Functionally, bifunctional wax ester synthase/diacylglycerol acyltransferase. Involved in cuticular wax biosynthesis. The polypeptide is Wax ester synthase/diacylglycerol acyltransferase 8 (Arabidopsis thaliana (Mouse-ear cress)).